We begin with the raw amino-acid sequence, 473 residues long: Ribulose bisphosphate carboxylase large chain (473 aa).

Positions 1–2 (MS) are excised as a propeptide. Pro-3 carries the post-translational modification N-acetylproline. Lys-14 carries the N6,N6,N6-trimethyllysine modification. Residues Asn-123 and Thr-173 each contribute to the substrate site. The active-site Proton acceptor is Lys-175. Substrate is bound at residue Lys-177. Mg(2+) contacts are provided by Lys-201, Asp-203, and Glu-204. At Lys-201 the chain carries N6-carboxylysine. The active-site Proton acceptor is His-294. Residues Arg-295, His-327, and Ser-379 each contribute to the substrate site.

This sequence belongs to the RuBisCO large chain family. Type I subfamily. In terms of assembly, heterohexadecamer of 8 large chains and 8 small chains; disulfide-linked. The disulfide link is formed within the large subunit homodimers. The cofactor is Mg(2+). The disulfide bond which can form in the large chain dimeric partners within the hexadecamer appears to be associated with oxidative stress and protein turnover.

It is found in the plastid. The protein localises to the chloroplast. It catalyses the reaction 2 (2R)-3-phosphoglycerate + 2 H(+) = D-ribulose 1,5-bisphosphate + CO2 + H2O. The enzyme catalyses D-ribulose 1,5-bisphosphate + O2 = 2-phosphoglycolate + (2R)-3-phosphoglycerate + 2 H(+). Its function is as follows. RuBisCO catalyzes two reactions: the carboxylation of D-ribulose 1,5-bisphosphate, the primary event in carbon dioxide fixation, as well as the oxidative fragmentation of the pentose substrate in the photorespiration process. Both reactions occur simultaneously and in competition at the same active site. This Ajuga chamaepitys (Yellow bugle) protein is Ribulose bisphosphate carboxylase large chain.